A 233-amino-acid chain; its full sequence is Ubiquitin carboxyl-terminal hydrolase isozyme L4 (233 aa).

A UCH catalytic domain is found at 5–232 (RWLPLEANPE…LRFNAIALSA (228 aa)). The interaction with ubiquitin stretch occupies residues 8-13 (PLEANP). C95 acts as the Nucleophile in catalysis. S133 is modified (phosphoserine). H172 (proton donor) is an active-site residue. Positions 222 to 227 (ELRFNA) are interaction with ubiquitin.

This sequence belongs to the peptidase C12 family. In terms of tissue distribution, expressed in various tissues at low level.

The protein localises to the cytoplasm. The enzyme catalyses Thiol-dependent hydrolysis of ester, thioester, amide, peptide and isopeptide bonds formed by the C-terminal Gly of ubiquitin (a 76-residue protein attached to proteins as an intracellular targeting signal).. Ubiquitin-protein hydrolase is involved both in the processing of ubiquitin precursors and of ubiquitinated proteins. This enzyme is a thiol protease that recognizes and hydrolyzes a peptide bond at the C-terminal glycine of ubiquitin. The polypeptide is Ubiquitin carboxyl-terminal hydrolase isozyme L4 (Uchl4) (Mus musculus (Mouse)).